Here is a 554-residue protein sequence, read N- to C-terminus: U4/U6 small nuclear ribonucleoprotein PRP4-like protein (554 aa).

The span at 48–65 (APIPMMPHPPVARPPTFR) shows a compositional bias: pro residues. The interval 48-99 (APIPMMPHPPVARPPTFRPPVSQNGGVKTSDSDSESDDEHIEISEESKQVRE) is disordered. Residues 88 to 99 (IEISEESKQVRE) are compositionally biased toward basic and acidic residues. WD repeat units lie at residues 253–292 (GDDRPLTGCSFSRDGKILATCSLSGVTKLWEMPQVTNTIA), 296–335 (DHKERATDVVFSPVDDCLATASADRTAKLWKTDGTLLQTF), 337–376 (GHLDRLARVAFHPSGKYLGTTSYDKTWRLWDINTGAELLL), 379–418 (GHSRSVYGIAFQQDGALAASCGLDSLARVWDLRTGRSILV), 421–460 (GHIKPVFSVNFSPNGYHLASGGEDNQCRIWDLRMRKSLYI), 463–503 (AHAN…LVKS), and 506–545 (GHESKVASLDITADSSCIATVSHDRTIKLWTSSGNDDEDE).

The protein localises to the nucleus speckle. Functionally, participates in pre-mRNA splicing. Part of the U4/U5/U6 tri-snRNP complex, one of the building blocks of the spliceosome. Essential for reproduction. In female gametophyte, is necessary for the egg cell and central cell fate determination and hence reproductive success. Involved in a mechanism that prevents accessory cells from adopting gametic cell fate. Modulates egg cell signaling center that regulates the development of all female gametophytic cells. The protein is U4/U6 small nuclear ribonucleoprotein PRP4-like protein of Arabidopsis thaliana (Mouse-ear cress).